The sequence spans 423 residues: Glycine amidinotransferase, mitochondrial (423 aa).

Residues 1-43 (MLRVRCLRGGSRGAEALHYIGSRLGRTVTGWVQRTFQSTQAAT) constitute a mitochondrion transit peptide. Phosphoserine is present on residues Ser46 and Ser49. Asp170 contributes to the arginine binding site. Active-site residues include Asp254 and His303. Arginine is bound by residues Asp305, Arg322, Ser354, and Ser355. Lys385 carries the N6-acetyllysine modification. Cys407 serves as the catalytic Amidino-cysteine intermediate.

Belongs to the amidinotransferase family. In terms of assembly, homodimer. In terms of tissue distribution, kidney. Expressed biallelically in placenta.

It localises to the mitochondrion inner membrane. The catalysed reaction is L-arginine + glycine = guanidinoacetate + L-ornithine. It carries out the reaction 4-aminobutanoate + L-arginine = 4-guanidinobutanoate + L-ornithine. It catalyses the reaction beta-alanine + L-arginine = 3-guanidinopropanoate + L-ornithine. The enzyme catalyses taurine + L-arginine = taurocyamine + L-ornithine. The protein operates within amine and polyamine biosynthesis; creatine biosynthesis; creatine from L-arginine and glycine: step 1/2. Transamidinase that catalyzes the transfer of the amidino group of L-arginine onto the amino moiety of acceptor metabolites such as glycine, beta-alanine, gamma-aminobutyric acid (GABA) and taurine yielding the corresponding guanidine derivatives. Catalyzes the rate-limiting step of creatine biosynthesis, namely the transfer of the amidino group from L-arginine to glycine to generate guanidinoacetate, which is then methylated by GAMT to form creatine. Provides creatine as a source for ATP generation in tissues with high energy demands, in particular skeletal muscle, heart and brain. This Sus scrofa (Pig) protein is Glycine amidinotransferase, mitochondrial (GATM).